The chain runs to 210 residues: Ribosomal RNA small subunit methyltransferase G (210 aa).

Residues G76, L81, 127 to 128, and R142 each bind S-adenosyl-L-methionine; that span reads VE.

This sequence belongs to the methyltransferase superfamily. RNA methyltransferase RsmG family.

It is found in the cytoplasm. The enzyme catalyses guanosine(527) in 16S rRNA + S-adenosyl-L-methionine = N(7)-methylguanosine(527) in 16S rRNA + S-adenosyl-L-homocysteine. Specifically methylates the N7 position of guanine in position 527 of 16S rRNA. This chain is Ribosomal RNA small subunit methyltransferase G, found in Vibrio atlanticus (strain LGP32) (Vibrio splendidus (strain Mel32)).